The chain runs to 199 residues: Thymidine kinase (199 aa).

ATP is bound by residues 23 to 30 and 95 to 98; these read GSMFSGKT and DEAQ. Residue Glu96 is the Proton acceptor of the active site. Positions 152, 155, 184, and 187 each coordinate Zn(2+).

It belongs to the thymidine kinase family. As to quaternary structure, homotetramer.

It localises to the cytoplasm. It carries out the reaction thymidine + ATP = dTMP + ADP + H(+). This is Thymidine kinase from Bacteroides fragilis (strain ATCC 25285 / DSM 2151 / CCUG 4856 / JCM 11019 / LMG 10263 / NCTC 9343 / Onslow / VPI 2553 / EN-2).